A 308-amino-acid polypeptide reads, in one-letter code: Tyrosine recombinase XerD (308 aa).

Residues 3–89 (NGFTRLTEQF…SIHEFHRFAL (87 aa)) form the Core-binding (CB) domain. The 192-residue stretch at 110–301 (TLPDVLTVDE…SPETLIETYL (192 aa)) folds into the Tyr recombinase domain. Catalysis depends on residues Arg-153, Lys-177, His-253, Arg-256, and His-279. Residue Tyr-288 is the O-(3'-phospho-DNA)-tyrosine intermediate of the active site.

This sequence belongs to the 'phage' integrase family. XerD subfamily. As to quaternary structure, forms a cyclic heterotetrameric complex composed of two molecules of XerC and two molecules of XerD.

It is found in the cytoplasm. Site-specific tyrosine recombinase, which acts by catalyzing the cutting and rejoining of the recombining DNA molecules. The XerC-XerD complex is essential to convert dimers of the bacterial chromosome into monomers to permit their segregation at cell division. It also contributes to the segregational stability of plasmids. The chain is Tyrosine recombinase XerD from Bifidobacterium longum (strain NCC 2705).